The chain runs to 392 residues: MALKLLGFNQDATCFSVISSNKGVTIYNCDPFGKCFELEKSTSNDEELDFLVEMLFSTSLIAVVDKTIGASKRKKLKIVNTKRKATICELTFPHEIMDVIMNRKIICVVLKSDQIFVYDISCMKLLRTIDVRGEKLKSTSKFRNSEAVGDIGVRVSLSTDNNSILCYSSYSKSDKENAPLNDIVVFDALKCIQINVLPAVHQSNIVCIACSPDGMLMATASEKGTIIRVFKTIDTENDEPILVNEFRRGSRPSRISEMKFNHDNTLLACVGESDTIHIFALPVTTTEADANEDDTLQQSSHSLSSSINGLQYISKGLANRFGKIIVSKIPTQSQQRHVAYIKIPENAKYRIGFPKDTTNTIHICGEDGNYLVYSIPRNEVGPCTLVKSNTFD.

WD repeat units follow at residues 200 to 240 (VHQS…NDEP) and 250 to 289 (SRPS…TEAD). The L/FRRG motif motif lies at 246–250 (FRRGS).

This sequence belongs to the WD repeat PROPPIN family.

It localises to the cytoplasm. The protein resides in the membrane. The protein localises to the vacuole membrane. Its function is as follows. Required for cytoplasm to vacuole transport (Cvt) vesicles formation and mitophagy. Involved in binding of phosphatidylethanolamine to ATG8 and in recruitment of ATG8 and ATG5 to the pre-autophagosomal structure. Protects ATG8 from ARG4-mediated cleavage. This Kluyveromyces lactis (strain ATCC 8585 / CBS 2359 / DSM 70799 / NBRC 1267 / NRRL Y-1140 / WM37) (Yeast) protein is Autophagy-related protein 21 (ATG21).